We begin with the raw amino-acid sequence, 841 residues long: Alpha-glucan phosphorylase 2, cytosolic (841 aa).

Positions 1–24 (MANANGKAATSLPEKISAKANPEA) are disordered. N6-(pyridoxal phosphate)lysine is present on Lys-687.

Belongs to the glycogen phosphorylase family. The cofactor is pyridoxal 5'-phosphate.

It localises to the cytoplasm. The catalysed reaction is [(1-&gt;4)-alpha-D-glucosyl](n) + phosphate = [(1-&gt;4)-alpha-D-glucosyl](n-1) + alpha-D-glucose 1-phosphate. Phosphorylase is an important allosteric enzyme in carbohydrate metabolism. Enzymes from different sources differ in their regulatory mechanisms and in their natural substrates. However, all known phosphorylases share catalytic and structural properties. This Arabidopsis thaliana (Mouse-ear cress) protein is Alpha-glucan phosphorylase 2, cytosolic (PHS2).